We begin with the raw amino-acid sequence, 1067 residues long: MEGGGMTTIPGFNQIQFEGFCRFIDQGLTEELSKFPKIEDIDQEIEFQLFVETYQLVEPLIKERDAVYDSLTYSSELYVSARLIWKTSRDMQEQTIFIGSIPLMNSQGTSIVNGIYRIVINQILQSPGIYYRSELDHNGISVYTGTIISDWGGRSELEIDRKARIWARVSRKQKISILVLSSAMGSNLREILENVCYPEIFLSFLSDKEKKKIGSKENAILEFYQQFACVDGDPIFSESLWKELQKKFFQQRCELGRIGRRNMNRRLNLDIPQNNTFLLPRDLLAAADHLIGLKFGMGTLDDMNHLQNKRIRSVADLLQDQFGLALVRLENAVRGTICGAIRHKLIPTPQNLVTSTPLTTTYESFFGLHPLSQVLDRTNPLTQIVHGRKFSSLGPGGLTGRTASFRIRDIHPSHYGRICPIDTSEGINVGLIGSLAIHARIGHWGSLESPFYEISERSTGVRMLYLSPGRDEYYMVAAGNSLALNQDIQEDQVVPARYRQEFLTIAWEQVHLRSIFPFQYFSIGASLIPFIEHNDANRALMSSNMQRQAVPLSRSEKCIVGTGVERQAALDSGALVIAEREGRVVYTDTDKILFSGDGETLSIPLVMYKRSNKNTCMHQKPQVQRGKCIKKGQILADGAATVEGELALGKNVLVAYMPWEGYNSEDAVLISERLVYEDIYTSFHIKKYEIQTHVTSQGPEKVTNEIPHLEAHFIRNLDKNGIVKQGSWVETGDVLVGKLTPQVVKESSYAPEDRLLRAILGIQVSTSKETCLKVPIGGRGRVIDVRWIQKKGGSSYNPEMIRVYILQKREIKVGDKVAGRHGNKGIISKILPRQDMPYLQDGRSVDLVFNPLGVPSRMNLGQIFECSLGLAGSLLDRHYRIAPFDERYEQEASRKVVFSELYEASKQTANPWAFEPEYPGKSRIFDGRTGNPFEQPVLIGKPYILKLIHQVDDKIHGRSSGHYALVTQQPLRGRAKQGGQRVGEMEVWALEGFGVAHILQEMLTYKSDHIRARQEVLGTTIVGGTIPNPKDAPESFRLLVRELRSLALELNHFLVSEKNFQIHRKEA.

Belongs to the RNA polymerase beta chain family. As to quaternary structure, in plastids the minimal PEP RNA polymerase catalytic core is composed of four subunits: alpha, beta, beta', and beta''. When a (nuclear-encoded) sigma factor is associated with the core the holoenzyme is formed, which can initiate transcription.

The protein localises to the plastid. The protein resides in the chloroplast. The enzyme catalyses RNA(n) + a ribonucleoside 5'-triphosphate = RNA(n+1) + diphosphate. DNA-dependent RNA polymerase catalyzes the transcription of DNA into RNA using the four ribonucleoside triphosphates as substrates. The polypeptide is DNA-directed RNA polymerase subunit beta (Ipomoea purpurea (Common morning glory)).